An 834-amino-acid chain; its full sequence is Meiotic sister-chromatid recombination protein 3 (834 aa).

4 disordered regions span residues 75-136 (PAAA…QPRT), 251-291 (EETE…TGSL), 343-378 (RKLA…KQPL), and 458-479 (VRRS…KKLT). Positions 343 to 368 (RKLAQPQQGQNQRRTVSFTQGSIDHM) are enriched in polar residues.

It is found in the cell membrane. In terms of biological role, may be involved in the control of meiotic sister-chromatid recombination. This Candida glabrata (strain ATCC 2001 / BCRC 20586 / JCM 3761 / NBRC 0622 / NRRL Y-65 / CBS 138) (Yeast) protein is Meiotic sister-chromatid recombination protein 3 (MSC3).